The following is a 305-amino-acid chain: Serine/threonine-protein kinase 16 (305 aa).

Residue glycine 2 is the site of N-myristoyl glycine attachment. S-palmitoyl cysteine attachment occurs at residues cysteine 6 and cysteine 8. Positions 20–293 constitute a Protein kinase domain; the sequence is YLFVQKLGEG…PVLLSQLEAL (274 aa). Residues 26–34 and lysine 49 contribute to the ATP site; that span reads LGEGGFSYV. Aspartate 148 (proton acceptor) is an active-site residue. The segment at 166–202 is activation loop; the sequence is DLGSMNQACIQVEGSRQALALQDWAAQRCTISYRAPE. Serine 197 is subject to Phosphoserine; by autocatalysis. Residue tyrosine 198 is modified to Phosphotyrosine; by autocatalysis.

This sequence belongs to the protein kinase superfamily. Ser/Thr protein kinase family. As to quaternary structure, monomer. Interacts with DRG1 (via its N-terminal); the interaction phosphorylates DRG1. In terms of processing, mainly autophosphorylated on serine/threonine residues. Also autophosphorylated on Tyr-198. As to expression, ubiquitously expressed at low levels. Relatively higher levels in testis, kidney and liver.

The protein resides in the cytoplasm. Its subcellular location is the perinuclear region. It localises to the membrane. It carries out the reaction L-seryl-[protein] + ATP = O-phospho-L-seryl-[protein] + ADP + H(+). The enzyme catalyses L-threonyl-[protein] + ATP = O-phospho-L-threonyl-[protein] + ADP + H(+). The catalysed reaction is L-tyrosyl-[protein] + ATP = O-phospho-L-tyrosyl-[protein] + ADP + H(+). In terms of biological role, membrane-associated protein kinase that phosphorylates on serine and threonine residues. In vitro substrates include DRG1, ENO1 and EIF4EBP1. Also autophosphorylates. May be involved in secretory vesicle trafficking or intracellular signaling. May have a role in regulating stromal-epithelial interactions that occur during ductal morphogenesis in the mammary gland. May be involved in TGF-beta signaling. Able to autophosphorylate on Tyr residue; it is however unclear whether it has tyrosine-protein kinase toward other proteins. This Mus musculus (Mouse) protein is Serine/threonine-protein kinase 16 (Stk16).